Consider the following 669-residue polypeptide: Probable potassium transport system protein Kup (669 aa).

12 helical membrane passes run 47–67, 86–106, 144–164, 172–192, 206–226, 252–272, 288–308, 326–346, 378–398, 404–424, 435–455, and 460–480; these read VLML…TSPL, VIGI…IKYM, TIIG…TPAI, GLTL…IFVM, IGVI…LLGI, GMAG…GEAL, WFFV…ALLL, ALLP…QALI, IYIP…VLTF, LAAA…ILAF, LLKS…FFGA, and IPHG…LMTT.

This sequence belongs to the HAK/KUP transporter (TC 2.A.72) family.

The protein resides in the cell inner membrane. It carries out the reaction K(+)(in) + H(+)(in) = K(+)(out) + H(+)(out). Its function is as follows. Transport of potassium into the cell. Likely operates as a K(+):H(+) symporter. This chain is Probable potassium transport system protein Kup, found in Bdellovibrio bacteriovorus (strain ATCC 15356 / DSM 50701 / NCIMB 9529 / HD100).